The primary structure comprises 428 residues: Patatin-like protein 3 (428 aa).

Residues 38–252 form the PNPLA domain; that stretch reads LSIDGGGIRG…AANNPTLCAI (215 aa). Positions 42-47 match the GXGXXG motif; that stretch reads GGGIRG. Residues 80–84 carry the GXSXG motif; the sequence is GTSTG. Serine 82 (nucleophile) is an active-site residue. The active-site Proton acceptor is the aspartate 239. Positions 239-241 match the DGA/G motif; sequence DGG. Residue serine 423 is modified to Phosphoserine.

Belongs to the patatin family. As to expression, expressed specifically in the stigma, ovary and funiculus of the ovary.

It is found in the cytoplasm. Functionally, possesses non-specific lipolytic acyl hydrolase (LAH) activity. Catalyzes the hydrolysis of the neutral lipids monogalactosyldiacylglycerol (MGDG), digalactosyldiacylglycerol (DGDG) and phosphatidylglycerol (PG), and less efficiently the polar lipids phosphatidylcholine (PC) and phosphatidylinositol (PI), but not the storage lipid triacylglycerol (TAG). May play a role in root development. The protein is Patatin-like protein 3 (PLP3) of Arabidopsis thaliana (Mouse-ear cress).